The primary structure comprises 635 residues: Probable potassium transport system protein Kup (635 aa).

Helical transmembrane passes span 20 to 40 (MALVIGAIGVVFGDIGTSPLY), 62 to 82 (VLSLAFWALMITVTLKYVTII), 111 to 131 (AYVVGILGIFGASLFFGDGVI), 149 to 169 (PSLHPFIVPITVVVLLVVFMV), 180 to 200 (VFGPITCLWFLSLGAIGIWNI), 223 to 243 (GWHGVFILGAVVLAVTGGEAL), 259 to 279 (WYFFVLPMLLLNYLGQGALVL), 292 to 312 (AVPSWALYPMIILATLAAVIA), 349 to 369 (IYVPGINWLLMVMVIALVLIF), 377 to 397 (VAYGISVSMTMLIDTLLLALV), 408 to 428 (WVLPLCVVFFIIELAFVIANG), and 429 to 449 (AKLLQGAWFPLALGIVVFTLM).

It belongs to the HAK/KUP transporter (TC 2.A.72) family.

The protein resides in the cell inner membrane. The catalysed reaction is K(+)(in) + H(+)(in) = K(+)(out) + H(+)(out). Its function is as follows. Transport of potassium into the cell. Likely operates as a K(+):H(+) symporter. This chain is Probable potassium transport system protein Kup, found in Xanthomonas campestris pv. campestris (strain 8004).